The following is a 233-amino-acid chain: Chromosome partition protein MukE (233 aa).

Positions 207 to 233 are disordered; sequence SLSLHDESDDADVTMGNAADSVEDEQE.

The protein belongs to the MukE family. Interacts, and probably forms a ternary complex, with MukF and MukB. The complex formation is stimulated by calcium or magnesium.

The protein resides in the cytoplasm. The protein localises to the nucleoid. Functionally, involved in chromosome condensation, segregation and cell cycle progression. May participate in facilitating chromosome segregation by condensation DNA from both sides of a centrally located replisome during cell division. Probably acts via its interaction with MukB and MukF. This chain is Chromosome partition protein MukE, found in Yersinia pestis.